Consider the following 448-residue polypeptide: tRNA(Ile)-lysidine synthase (448 aa).

29 to 34 (SGGVDS) contacts ATP.

It belongs to the tRNA(Ile)-lysidine synthase family.

The protein resides in the cytoplasm. It carries out the reaction cytidine(34) in tRNA(Ile2) + L-lysine + ATP = lysidine(34) in tRNA(Ile2) + AMP + diphosphate + H(+). Ligates lysine onto the cytidine present at position 34 of the AUA codon-specific tRNA(Ile) that contains the anticodon CAU, in an ATP-dependent manner. Cytidine is converted to lysidine, thus changing the amino acid specificity of the tRNA from methionine to isoleucine. The polypeptide is tRNA(Ile)-lysidine synthase (Azoarcus sp. (strain BH72)).